The following is a 588-amino-acid chain: DNA mismatch repair protein MutL (588 aa).

This sequence belongs to the DNA mismatch repair MutL/HexB family.

Functionally, this protein is involved in the repair of mismatches in DNA. It is required for dam-dependent methyl-directed DNA mismatch repair. May act as a 'molecular matchmaker', a protein that promotes the formation of a stable complex between two or more DNA-binding proteins in an ATP-dependent manner without itself being part of a final effector complex. This Methanocorpusculum labreanum (strain ATCC 43576 / DSM 4855 / Z) protein is DNA mismatch repair protein MutL.